The primary structure comprises 217 residues: Glycosylphosphatidylinositol anchor biosynthesis protein 11 (217 aa).

An N-linked (GlcNAc...) asparagine glycan is attached at Asn-20. The next 6 membrane-spanning stretches (helical) occupy residues 41 to 61, 66 to 86, 107 to 127, 139 to 159, 169 to 189, and 197 to 217; these read VYVRKSWTLIPFHLLALLYWF, DFNLLALLYIMIPTQVIYLIF, FITLGACLLLSIPCLAIIVLF, WLLALHCCFLTYPAVYDVFNC, YFISVVIGCWISCFVIPLDWD, and VPLIVGAYLGSFIGFSIGGYI.

The protein belongs to the PIGF family.

Its subcellular location is the endoplasmic reticulum membrane. It participates in glycolipid biosynthesis; glycosylphosphatidylinositol-anchor biosynthesis. Functionally, acts in the GPI biosynthetic pathway between GlcNAc-PI synthesis and GPI transfer to protein. This chain is Glycosylphosphatidylinositol anchor biosynthesis protein 11 (GPI11), found in Kluyveromyces lactis (strain ATCC 8585 / CBS 2359 / DSM 70799 / NBRC 1267 / NRRL Y-1140 / WM37) (Yeast).